The following is a 337-amino-acid chain: Serpentine receptor class beta-6 (337 aa).

Helical transmembrane passes span 20–40, 62–82, 98–118, 138–158, 183–203, 234–254, and 273–293; these read QFYT…LIIF, ILIS…IPFL, IFQN…LGIT, IGVF…YFFF, WLCY…YFLV, TFIS…TLII, and GVYI…CVIL.

Belongs to the nematode receptor-like protein srb family. Expressed in the ADL, ADF and ASH chemosensory neurons in the head and in the PHA and PHB chemosensory neurons in the tail. Low expression also observed in the egg-laying structures in the mid-body region.

The protein localises to the cell membrane. Mediates recognition and avoidance of Streptomyces species by detecting dodecanoic acid secreted by the bacteria. Also mediates avoidance of decanoic acid which is not secreted by Streptomyces species but this may represent an additional important avoidance response in the environment. In Caenorhabditis elegans, this protein is Serpentine receptor class beta-6 (srb-6).